A 310-amino-acid chain; its full sequence is Nucleotide-binding protein Mmc1_3333 (310 aa).

Residue 19-26 (GLSGAGKS) coordinates ATP.

This sequence belongs to the RapZ-like family.

Functionally, displays ATPase and GTPase activities. In Magnetococcus marinus (strain ATCC BAA-1437 / JCM 17883 / MC-1), this protein is Nucleotide-binding protein Mmc1_3333.